A 254-amino-acid chain; its full sequence is MSFTVIIPARFASSRLPGKPLADIAGKPMIQHVFEKALQSGASRVIIATDNENVADVAKNFGAEVCMTSVNHNSGTERLAEVVEKLAIPDNEIIVNIQGDEPLIPPVIVRQVADNLAKFNVNMASLAVKIHDAEELFNPNAVKVLTDKDGYVLYFSRSVIPYDRDQFMNLQNVQKVQLADAYLRHIGIYAYRAGFIKQYVQWAPTQLENLEKLEQLRVLYNGERIHVELAKEVPAVGVDTAEDLEKVRLILAKD.

Belongs to the KdsB family.

The protein localises to the cytoplasm. It carries out the reaction 3-deoxy-alpha-D-manno-oct-2-ulosonate + CTP = CMP-3-deoxy-beta-D-manno-octulosonate + diphosphate. The protein operates within nucleotide-sugar biosynthesis; CMP-3-deoxy-D-manno-octulosonate biosynthesis; CMP-3-deoxy-D-manno-octulosonate from 3-deoxy-D-manno-octulosonate and CTP: step 1/1. Its pathway is bacterial outer membrane biogenesis; lipopolysaccharide biosynthesis. Functionally, activates KDO (a required 8-carbon sugar) for incorporation into bacterial lipopolysaccharide in Gram-negative bacteria. This chain is 3-deoxy-manno-octulosonate cytidylyltransferase, found in Haemophilus influenzae (strain PittEE).